The primary structure comprises 143 residues: Transcriptional regulator MraZ (143 aa).

SpoVT-AbrB domains lie at 5–47 and 76–119; these read TFTP…PKAE and ADEQ…DAES.

It belongs to the MraZ family. In terms of assembly, forms oligomers.

The protein resides in the cytoplasm. It localises to the nucleoid. This is Transcriptional regulator MraZ from Corynebacterium jeikeium (strain K411).